Here is a 150-residue protein sequence, read N- to C-terminus: D-aminoacyl-tRNA deacylase (150 aa).

Positions 136–137 match the Gly-cisPro motif, important for rejection of L-amino acids motif; the sequence is GP.

Belongs to the DTD family. As to quaternary structure, homodimer.

It localises to the cytoplasm. It catalyses the reaction glycyl-tRNA(Ala) + H2O = tRNA(Ala) + glycine + H(+). The enzyme catalyses a D-aminoacyl-tRNA + H2O = a tRNA + a D-alpha-amino acid + H(+). Functionally, an aminoacyl-tRNA editing enzyme that deacylates mischarged D-aminoacyl-tRNAs. Also deacylates mischarged glycyl-tRNA(Ala), protecting cells against glycine mischarging by AlaRS. Acts via tRNA-based rather than protein-based catalysis; rejects L-amino acids rather than detecting D-amino acids in the active site. By recycling D-aminoacyl-tRNA to D-amino acids and free tRNA molecules, this enzyme counteracts the toxicity associated with the formation of D-aminoacyl-tRNA entities in vivo and helps enforce protein L-homochirality. The protein is D-aminoacyl-tRNA deacylase of Staphylococcus haemolyticus (strain JCSC1435).